A 588-amino-acid chain; its full sequence is Pre-mRNA-splicing ATP-dependent RNA helicase PRP28 (588 aa).

The tract at residues 15 to 94 (NKKKGLDENT…PSKQNGSKFH (80 aa)) is disordered. 2 stretches are compositionally biased toward basic and acidic residues: residues 35 to 49 (NKQE…KENE) and 60 to 83 (AKVE…DKKR). S69 is subject to Phosphoserine. A Q motif motif is present at residues 172 to 202 (RNWEELNIIPRDLLRVIIQELRFPSPTPIQR). A Helicase ATP-binding domain is found at 208–399 (VCNMKQYRDF…AGYMQKPVYA (192 aa)). 221-228 (ASTGSGKT) is a binding site for ATP. Residues 341–344 (DEAD) carry the DEAD box motif. Residues 427 to 579 (KLKPIVAKYD…EAVKNKYNVG (153 aa)) form the Helicase C-terminal domain.

The protein belongs to the DEAD box helicase family. DDX23/PRP28 subfamily. Component of the U5 snRNP complex, composed of at least BRR2, PRP8, PRP28, DIB1, LIN1, SMB1, SMD1, SMD2, SMD3, SME1, SMX2, SMX3, and SNU114, associated with the U5 snRNA.

The protein resides in the cytoplasm. Its subcellular location is the nucleus. The catalysed reaction is ATP + H2O = ADP + phosphate + H(+). Functionally, ATP-dependent RNA helicase involved in mRNA splicing. May destabilize the U1/5'-splice site duplex to permit an effective competition for the 5'-splice site by the U6 snRNA, resulting in the switch between U1 and U6 at the 5'-splice site. May also act to unwind the U4/U6 base-pairing interaction in the U4/U6/U5 snRNP, facilitating the first covalent step of splicing. This is Pre-mRNA-splicing ATP-dependent RNA helicase PRP28 (PRP28) from Saccharomyces cerevisiae (strain ATCC 204508 / S288c) (Baker's yeast).